A 357-amino-acid polypeptide reads, in one-letter code: UDP-N-acetylglucosamine--N-acetylmuramyl-(pentapeptide) pyrophosphoryl-undecaprenol N-acetylglucosamine transferase (357 aa).

UDP-N-acetyl-alpha-D-glucosamine-binding positions include 13 to 15 (TGG), asparagine 125, arginine 161, serine 189, isoleucine 243, and glutamine 288.

The protein belongs to the glycosyltransferase 28 family. MurG subfamily.

Its subcellular location is the cell inner membrane. The enzyme catalyses di-trans,octa-cis-undecaprenyl diphospho-N-acetyl-alpha-D-muramoyl-L-alanyl-D-glutamyl-meso-2,6-diaminopimeloyl-D-alanyl-D-alanine + UDP-N-acetyl-alpha-D-glucosamine = di-trans,octa-cis-undecaprenyl diphospho-[N-acetyl-alpha-D-glucosaminyl-(1-&gt;4)]-N-acetyl-alpha-D-muramoyl-L-alanyl-D-glutamyl-meso-2,6-diaminopimeloyl-D-alanyl-D-alanine + UDP + H(+). The protein operates within cell wall biogenesis; peptidoglycan biosynthesis. Its function is as follows. Cell wall formation. Catalyzes the transfer of a GlcNAc subunit on undecaprenyl-pyrophosphoryl-MurNAc-pentapeptide (lipid intermediate I) to form undecaprenyl-pyrophosphoryl-MurNAc-(pentapeptide)GlcNAc (lipid intermediate II). The chain is UDP-N-acetylglucosamine--N-acetylmuramyl-(pentapeptide) pyrophosphoryl-undecaprenol N-acetylglucosamine transferase from Bordetella pertussis (strain Tohama I / ATCC BAA-589 / NCTC 13251).